The sequence spans 162 residues: Putative 4-hydroxy-4-methyl-2-oxoglutarate aldolase (162 aa).

Residues 75 to 78 and Arg-97 contribute to the substrate site; that span reads GDML. A divalent metal cation is bound at residue Asp-98.

Belongs to the class II aldolase/RraA-like family. As to quaternary structure, homotrimer. The cofactor is a divalent metal cation.

The enzyme catalyses 4-hydroxy-4-methyl-2-oxoglutarate = 2 pyruvate. It carries out the reaction oxaloacetate + H(+) = pyruvate + CO2. Its function is as follows. Catalyzes the aldol cleavage of 4-hydroxy-4-methyl-2-oxoglutarate (HMG) into 2 molecules of pyruvate. Also contains a secondary oxaloacetate (OAA) decarboxylase activity due to the common pyruvate enolate transition state formed following C-C bond cleavage in the retro-aldol and decarboxylation reactions. The protein is Putative 4-hydroxy-4-methyl-2-oxoglutarate aldolase of Azotobacter vinelandii (strain DJ / ATCC BAA-1303).